Here is a 63-residue protein sequence, read N- to C-terminus: Large ribosomal subunit protein bL28 (63 aa).

Belongs to the bacterial ribosomal protein bL28 family.

This Alkaliphilus oremlandii (strain OhILAs) (Clostridium oremlandii (strain OhILAs)) protein is Large ribosomal subunit protein bL28.